Consider the following 303-residue polypeptide: Pyridoxal 5'-phosphate synthase subunit PdxS (303 aa).

A D-ribose 5-phosphate-binding site is contributed by Asp-33. The active-site Schiff-base intermediate with D-ribose 5-phosphate is the Lys-90. Position 162 (Gly-162) interacts with D-ribose 5-phosphate. D-glyceraldehyde 3-phosphate is bound at residue Arg-174. D-ribose 5-phosphate contacts are provided by residues Gly-223 and 244-245 (GS).

The protein belongs to the PdxS/SNZ family. As to quaternary structure, in the presence of PdxT, forms a dodecamer of heterodimers.

It carries out the reaction aldehydo-D-ribose 5-phosphate + D-glyceraldehyde 3-phosphate + L-glutamine = pyridoxal 5'-phosphate + L-glutamate + phosphate + 3 H2O + H(+). It functions in the pathway cofactor biosynthesis; pyridoxal 5'-phosphate biosynthesis. In terms of biological role, catalyzes the formation of pyridoxal 5'-phosphate from ribose 5-phosphate (RBP), glyceraldehyde 3-phosphate (G3P) and ammonia. The ammonia is provided by the PdxT subunit. Can also use ribulose 5-phosphate and dihydroxyacetone phosphate as substrates, resulting from enzyme-catalyzed isomerization of RBP and G3P, respectively. The sequence is that of Pyridoxal 5'-phosphate synthase subunit PdxS from Streptomyces coelicolor (strain ATCC BAA-471 / A3(2) / M145).